A 475-amino-acid chain; its full sequence is Glutamate--tRNA ligase (475 aa).

Positions 9-19 match the 'HIGH' region motif; that stretch reads PSPTGYLHVGG. A 'KMSKS' region motif is present at residues 240 to 244; sequence KLSKR. Lysine 243 provides a ligand contact to ATP.

The protein belongs to the class-I aminoacyl-tRNA synthetase family. Glutamate--tRNA ligase type 1 subfamily. As to quaternary structure, monomer.

The protein localises to the cytoplasm. It carries out the reaction tRNA(Glu) + L-glutamate + ATP = L-glutamyl-tRNA(Glu) + AMP + diphosphate. Catalyzes the attachment of glutamate to tRNA(Glu) in a two-step reaction: glutamate is first activated by ATP to form Glu-AMP and then transferred to the acceptor end of tRNA(Glu). The protein is Glutamate--tRNA ligase of Vibrio campbellii (strain ATCC BAA-1116).